A 372-amino-acid chain; its full sequence is tRNA-specific 2-thiouridylase MnmA (372 aa).

ATP contacts are provided by residues 16 to 23 (GMSGGVDS) and Met42. Residues 102 to 104 (NPD) are interaction with target base in tRNA. The active-site Nucleophile is Cys107. An intrachain disulfide couples Cys107 to Cys205. Gly132 serves as a coordination point for ATP. An interaction with tRNA region spans residues 155–157 (KDQ). Catalysis depends on Cys205, which acts as the Cysteine persulfide intermediate. The segment at 317 to 318 (RY) is interaction with tRNA.

The protein belongs to the MnmA/TRMU family.

Its subcellular location is the cytoplasm. The catalysed reaction is S-sulfanyl-L-cysteinyl-[protein] + uridine(34) in tRNA + AH2 + ATP = 2-thiouridine(34) in tRNA + L-cysteinyl-[protein] + A + AMP + diphosphate + H(+). In terms of biological role, catalyzes the 2-thiolation of uridine at the wobble position (U34) of tRNA, leading to the formation of s(2)U34. This Shewanella oneidensis (strain ATCC 700550 / JCM 31522 / CIP 106686 / LMG 19005 / NCIMB 14063 / MR-1) protein is tRNA-specific 2-thiouridylase MnmA.